We begin with the raw amino-acid sequence, 298 residues long: MKPRHFVTLRDLSSAEFRALIARAIDLKARKEPYEPLKNKVLGMVFEKSSTRTRVSFEVGMAQFGGSSIFLSPRDTQLGRGEPIEDSARVLSRMVDCIMLRTHAHRTVEIFAEYSRVPVINGLTDRFHPCQLLADMQTYFEHRGDIAGKTVAWIGDGNNMCQTYVHAAGLLDFRLRIACPPGYEPEAELVEAAGKCVEVGHDVRTAVNGADLVVTDVWASMGQESEQTERTGAFRDYQVNAALMALAHADALFMHCLPAHRGEEVSAEVLEGPQSVVWDEAENRLHAQKALLEFLLTA.

Carbamoyl phosphate is bound by residues 50–53 (STRT), Q77, R101, and 128–131 (HPCQ). L-ornithine contacts are provided by residues N159, D216, and 220–221 (SM). Residues 256-257 (CL) and R284 each bind carbamoyl phosphate.

Belongs to the aspartate/ornithine carbamoyltransferase superfamily. OTCase family.

Its subcellular location is the cytoplasm. It carries out the reaction carbamoyl phosphate + L-ornithine = L-citrulline + phosphate + H(+). The protein operates within amino-acid biosynthesis; L-arginine biosynthesis; L-arginine from L-ornithine and carbamoyl phosphate: step 1/3. Functionally, reversibly catalyzes the transfer of the carbamoyl group from carbamoyl phosphate (CP) to the N(epsilon) atom of ornithine (ORN) to produce L-citrulline. This chain is Ornithine carbamoyltransferase, found in Methylococcus capsulatus (strain ATCC 33009 / NCIMB 11132 / Bath).